Here is a 436-residue protein sequence, read N- to C-terminus: 3-ketoacyl-CoA thiolase (436 aa).

The active-site Acyl-thioester intermediate is the cysteine 99. Active-site proton acceptor residues include histidine 392 and cysteine 422.

It belongs to the thiolase-like superfamily. Thiolase family. As to quaternary structure, heterotetramer of two alpha chains (FadJ) and two beta chains (FadI).

The protein localises to the cytoplasm. The enzyme catalyses an acyl-CoA + acetyl-CoA = a 3-oxoacyl-CoA + CoA. The protein operates within lipid metabolism; fatty acid beta-oxidation. In terms of biological role, catalyzes the final step of fatty acid oxidation in which acetyl-CoA is released and the CoA ester of a fatty acid two carbons shorter is formed. In Salmonella typhi, this protein is 3-ketoacyl-CoA thiolase.